The primary structure comprises 298 residues: Apolipoprotein E (298 aa).

The N-terminal stretch at 1 to 18 is a signal peptide; sequence MKVLWAALVVTLLAGCQA. A run of 6 repeats spans residues 74–95, 96–117, 118–139, 140–161, 162–183, and 223–244. Residues 74–244 form an 8 X 22 AA approximate tandem repeats region; it reads LLMEDTMKEV…RLEEVREQME (171 aa). M137 bears the Methionine sulfoxide mark. A Phosphoserine modification is found at S141. Residues 152–162 are LDL and other lipoprotein receptors binding; it reads HLRKLRKRLLR. 156–159 lines the heparin pocket; sequence LRKR. Residues 204–272 form a lipid-binding and lipoprotein association region; it reads SLPSQPLRER…SWFEPMMEDM (69 aa). A heparin-binding site is contributed by 218–225; it reads GEQMRGRL. The tract at residues 260-272 is specificity for association with VLDL; it reads RFKSWFEPMMEDM.

It belongs to the apolipoprotein A1/A4/E family. In terms of assembly, homotetramer. May interact with ABCA1; functionally associated with ABCA1 in the biogenesis of HDLs. May interact with APP/A4 amyloid-beta peptide; the interaction is extremely stable in vitro but its physiological significance is unclear. May interact with MAPT. May interact with MAP2. In the cerebrospinal fluid, interacts with secreted SORL1. Interacts with PMEL; this allows the loading of PMEL luminal fragment on ILVs to induce fibril nucleation. APOE exists as multiple glycosylated and sialylated glycoforms within cells and in plasma. The extent of glycosylation and sialylation are tissue and context specific. Post-translationally, glycated in plasma VLDL. In terms of processing, phosphorylated by FAM20C in the extracellular medium.

The protein resides in the secreted. The protein localises to the extracellular space. It is found in the extracellular matrix. Its subcellular location is the extracellular vesicle. It localises to the endosome. The protein resides in the multivesicular body. Functionally, APOE is an apolipoprotein, a protein associating with lipid particles, that mainly functions in lipoprotein-mediated lipid transport between organs via the plasma and interstitial fluids. APOE is a core component of plasma lipoproteins and is involved in their production, conversion and clearance. Apolipoproteins are amphipathic molecules that interact both with lipids of the lipoprotein particle core and the aqueous environment of the plasma. As such, APOE associates with chylomicrons, chylomicron remnants, very low density lipoproteins (VLDL) and intermediate density lipoproteins (IDL) but shows a preferential binding to high-density lipoproteins (HDL). It also binds a wide range of cellular receptors including the LDL receptor/LDLR, the LDL receptor-related proteins LRP1, LRP2 and LRP8 and the very low-density lipoprotein receptor/VLDLR that mediate the cellular uptake of the APOE-containing lipoprotein particles. Finally, APOE also has a heparin-binding activity and binds heparan-sulfate proteoglycans on the surface of cells, a property that supports the capture and the receptor-mediated uptake of APOE-containing lipoproteins by cells. A main function of APOE is to mediate lipoprotein clearance through the uptake of chylomicrons, VLDLs, and HDLs by hepatocytes. APOE is also involved in the biosynthesis by the liver of VLDLs as well as their uptake by peripheral tissues ensuring the delivery of triglycerides and energy storage in muscle, heart and adipose tissues. By participating in the lipoprotein-mediated distribution of lipids among tissues, APOE plays a critical role in plasma and tissues lipid homeostasis. APOE is also involved in two steps of reverse cholesterol transport, the HDLs-mediated transport of cholesterol from peripheral tissues to the liver, and thereby plays an important role in cholesterol homeostasis. First, it is functionally associated with ABCA1 in the biogenesis of HDLs in tissues. Second, it is enriched in circulating HDLs and mediates their uptake by hepatocytes. APOE also plays an important role in lipid transport in the central nervous system, regulating neuron survival and sprouting. The protein is Apolipoprotein E (APOE) of Dasyprocta punctata (Central American agouti).